Consider the following 341-residue polypeptide: UDP-3-O-(3-hydroxymyristoyl)glucosamine N-acyltransferase (341 aa).

His239 functions as the Proton acceptor in the catalytic mechanism.

It belongs to the transferase hexapeptide repeat family. LpxD subfamily. Homotrimer.

The catalysed reaction is a UDP-3-O-[(3R)-3-hydroxyacyl]-alpha-D-glucosamine + a (3R)-hydroxyacyl-[ACP] = a UDP-2-N,3-O-bis[(3R)-3-hydroxyacyl]-alpha-D-glucosamine + holo-[ACP] + H(+). The enzyme catalyses UDP-3-O-[(3R)-3-hydroxytetradecanoyl]-alpha-D-glucosamine + (3R)-hydroxytetradecanoyl-[ACP] = UDP-2-N,3-O-bis[(3R)-3-hydroxytetradecanoyl]-alpha-D-glucosamine + holo-[ACP] + H(+). The protein operates within glycolipid biosynthesis; lipid IV(A) biosynthesis; lipid IV(A) from (3R)-3-hydroxytetradecanoyl-[acyl-carrier-protein] and UDP-N-acetyl-alpha-D-glucosamine: step 3/6. Functionally, catalyzes the N-acylation of UDP-3-O-(hydroxytetradecanoyl)glucosamine using 3-hydroxytetradecanoyl-ACP as the acyl donor. Is involved in the biosynthesis of lipid A, a phosphorylated glycolipid that anchors the lipopolysaccharide to the outer membrane of the cell. This Salmonella paratyphi A (strain ATCC 9150 / SARB42) protein is UDP-3-O-(3-hydroxymyristoyl)glucosamine N-acyltransferase.